We begin with the raw amino-acid sequence, 425 residues long: Enolase (425 aa).

Position 162 (Gln-162) interacts with (2R)-2-phosphoglycerate. Glu-204 (proton donor) is an active-site residue. Residues Asp-241, Glu-284, and Asp-311 each contribute to the Mg(2+) site. Positions 336, 365, 366, and 387 each coordinate (2R)-2-phosphoglycerate. The active-site Proton acceptor is the Lys-336.

The protein belongs to the enolase family. The cofactor is Mg(2+).

The protein localises to the cytoplasm. The protein resides in the secreted. It localises to the cell surface. The catalysed reaction is (2R)-2-phosphoglycerate = phosphoenolpyruvate + H2O. It participates in carbohydrate degradation; glycolysis; pyruvate from D-glyceraldehyde 3-phosphate: step 4/5. Functionally, catalyzes the reversible conversion of 2-phosphoglycerate (2-PG) into phosphoenolpyruvate (PEP). It is essential for the degradation of carbohydrates via glycolysis. In Brucella melitensis biotype 2 (strain ATCC 23457), this protein is Enolase.